The following is a 356-amino-acid chain: Cobalt-precorrin-5B C(1)-methyltransferase (356 aa).

Belongs to the CbiD family.

It carries out the reaction Co-precorrin-5B + S-adenosyl-L-methionine = Co-precorrin-6A + S-adenosyl-L-homocysteine. It participates in cofactor biosynthesis; adenosylcobalamin biosynthesis; cob(II)yrinate a,c-diamide from sirohydrochlorin (anaerobic route): step 6/10. Its function is as follows. Catalyzes the methylation of C-1 in cobalt-precorrin-5B to form cobalt-precorrin-6A. This Citrifermentans bemidjiense (strain ATCC BAA-1014 / DSM 16622 / JCM 12645 / Bem) (Geobacter bemidjiensis) protein is Cobalt-precorrin-5B C(1)-methyltransferase.